The following is a 461-amino-acid chain: Phenolic glucoside malonyltransferase 1 (461 aa).

The active-site Proton acceptor is H167. Residues 167–171 (HAAQD) carry the HXXXD motif motif. 281–282 (ST) is a malonyl-CoA binding site. Residue D400 is the Proton acceptor of the active site. The DFGWG motif signature appears at 400 to 404 (DFGWG).

It belongs to the plant acyltransferase family. Phenolic glucoside malonyltransferase subfamily. Expressed in all tissues. Most highly expressed in the abdomen and especially in the gut.

It carries out the reaction a flavonol 3-O-beta-D-glucoside + malonyl-CoA = a flavonol 3-O-(6-O-malonyl-beta-D-glucoside) + CoA. The catalysed reaction is kaempferol 3-O-beta-D-glucoside + malonyl-CoA = kaempferol 3-O-(6-O-malonyl-beta-D-glucoside) + CoA. It catalyses the reaction quercetin 3-O-beta-D-glucoside + malonyl-CoA = quercetin 3-O-(6-O-malonyl-beta-D-glucoside) + CoA. The enzyme catalyses a flavonol 7-O-beta-D-glucoside + malonyl-CoA = a flavonol 7-O-(6-O-malonyl-beta-D-glucoside) + CoA. It carries out the reaction (2S)-naringenin 7-O-beta-D-glucoside + malonyl-CoA = (2S)-naringenin 7-O-(6-O-malonyl-beta-D-glucoside) + CoA. The catalysed reaction is kaempferol 7-O-beta-D-glucoside + malonyl-CoA = kaempferol 7-O-(6-O-malonyl-beta-D-glucoside) + CoA. It catalyses the reaction apigenin 7-O-beta-D-glucoside + malonyl-CoA = apigenin 7-O-(6-O-malonyl-beta-D-glucoside) + CoA. The enzyme catalyses rhaponticin + malonyl-CoA = 6-O-malonyl-rhaponticin + CoA. Functionally, phenolic glucoside malonyltransferase that neutralizes phenolic glycosides in host plants. Catalyzes the transfer of a malonyl group from malonyl-CoA to the phenolic glycosides, leading to their detoxification. Phenolic glycosides, which are among the most abundant plant secondary metabolites, act as plant defense compounds: they strongly affect growth, development and behavior of insect herbivores. Has malonyltransferase activity against flavonoids kaempferol 3-O-glucoside, kaempferol 7-O-glucoside, isoquercetin (quercetin 3-O-beta-D-glucopyranoside), apigetrin (apigenin 7-O-beta-D-glucoside) and prunin (naringenin 7-O-beta-D-glucoside). Also has activity toward non-flavonoid rhaponticin, but with lower efficiency. The polypeptide is Phenolic glucoside malonyltransferase 1 (Bemisia tabaci (Sweetpotato whitefly)).